The chain runs to 685 residues: Translation initiation factor IF-2 (685 aa).

The 170-residue stretch at lysine 185–lysine 354 folds into the tr-type G domain. Positions glycine 194–threonine 201 are G1. Glycine 194 to threonine 201 contributes to the GTP binding site. The G2 stretch occupies residues glycine 219–histidine 223. Residues aspartate 240 to glycine 243 are G3. GTP-binding positions include aspartate 240 to histidine 244 and asparagine 294 to aspartate 297. The segment at asparagine 294–aspartate 297 is G4. The segment at serine 330 to histidine 332 is G5.

It belongs to the TRAFAC class translation factor GTPase superfamily. Classic translation factor GTPase family. IF-2 subfamily.

Its subcellular location is the cytoplasm. Functionally, one of the essential components for the initiation of protein synthesis. Protects formylmethionyl-tRNA from spontaneous hydrolysis and promotes its binding to the 30S ribosomal subunits. Also involved in the hydrolysis of GTP during the formation of the 70S ribosomal complex. In Clostridium tetani (strain Massachusetts / E88), this protein is Translation initiation factor IF-2.